We begin with the raw amino-acid sequence, 239 residues long: 4-hydroxy-tetrahydrodipicolinate reductase (239 aa).

Residues 12 to 17, 94 to 96, and 118 to 121 contribute to the NAD(+) site; these read GASGRM, GTT, and ASNF. His-150 functions as the Proton donor/acceptor in the catalytic mechanism. Position 151 (His-151) interacts with (S)-2,3,4,5-tetrahydrodipicolinate. Residue Lys-154 is the Proton donor of the active site. Residue 160-161 coordinates (S)-2,3,4,5-tetrahydrodipicolinate; sequence GT.

Belongs to the DapB family.

It localises to the cytoplasm. It carries out the reaction (S)-2,3,4,5-tetrahydrodipicolinate + NAD(+) + H2O = (2S,4S)-4-hydroxy-2,3,4,5-tetrahydrodipicolinate + NADH + H(+). It catalyses the reaction (S)-2,3,4,5-tetrahydrodipicolinate + NADP(+) + H2O = (2S,4S)-4-hydroxy-2,3,4,5-tetrahydrodipicolinate + NADPH + H(+). It functions in the pathway amino-acid biosynthesis; L-lysine biosynthesis via DAP pathway; (S)-tetrahydrodipicolinate from L-aspartate: step 4/4. Catalyzes the conversion of 4-hydroxy-tetrahydrodipicolinate (HTPA) to tetrahydrodipicolinate. The sequence is that of 4-hydroxy-tetrahydrodipicolinate reductase from Stenotrophomonas maltophilia (strain R551-3).